Consider the following 2062-residue polypeptide: Unconventional myosin-X (2062 aa).

An N-acetylmethionine modification is found at Met1. A Myosin motor domain is found at 63 to 739 (EGVDDMASLA…LEQKLEKRRE (677 aa)). ATP contacts are provided by residues Asn104, Tyr113, 160–165 (GAGKTE), and Asn215. The actin-binding stretch occupies residues 619-641 (LHSLMATLSSSNPFFVRCIKPNT). IQ domains lie at 742 to 771 (IDRA…GVVT), 765 to 794 (VLCG…AAIV), and 788 to 817 (LKKA…EKRE). The segment at 814-882 (EKRELEEKKR…LTRELEKQRE (69 aa)) is SAH. A disordered region spans residues 822-844 (KRREEEKKREEEERERERAQREA). Residues 883-933 (NKQVEEILRLEKEIEDLQRMKERQELSLTEASLQKLQQLRDEELRRLEDEA) are a coiled coil. A phosphoserine mark is found at Ser961, Ser964, and Ser967. Disordered regions lie at residues 963–1047 (GSEI…VVPT) and 1062–1089 (QDSA…LPSP). Residues 993-1007 (AEEEVDEGFEADDDA) show a composition bias toward acidic residues. Over residues 1062-1085 (QDSASLHNSSSGESTYCMPQNNGD) the composition is skewed to polar residues. At Thr1162 the chain carries Phosphothreonine. PH domains lie at 1216–1314 (EALK…QVHS) and 1396–1501 (EFIV…NVTD). Residues 1551-1699 (LPYGDINLNL…PSRDEIEALI (149 aa)) form the MyTH4 domain. The FERM domain occupies 1704–2048 (MTSTVYCHGG…AYISMIVKKR (345 aa)).

The protein belongs to the TRAFAC class myosin-kinesin ATPase superfamily. Myosin family. In terms of assembly, monomer, when in an inactive conformation in the cytosol. Homodimer in its active, membrane-bound conformation; antiparallel coiled coil-mediated dimer formation. Interacts with ECPAS. Interacts with DCC and ITGB5; the presence of DCC inhibits ITGB5 binding. Interacts with tubulin; ITGB5 or DCC binding inhibits tubulin binding. Interacts strongly with CALM3 and weakly with CALM, the CALM3 interaction is essential for function in filopodial extension and motility. Interacts with ITGB1, ITGB3 and ITGB5. Interacts with NEO1. Interacts with VASP. The initiator methionine for isoform Headless is removed. As to expression, detected in brain, heart, kidney, liver, stomach, skeletal muscle, lung, testis and skin. Isoform Headless is expressed in embryonic and neuronal stem cells, and enriched in proliferating and migrating cells.

It is found in the cytoplasm. The protein resides in the cytosol. The protein localises to the cell projection. It localises to the lamellipodium. Its subcellular location is the ruffle. It is found in the cytoskeleton. The protein resides in the filopodium tip. The protein localises to the cell cortex. It localises to the filopodium membrane. Functionally, myosins are actin-based motor molecules with ATPase activity. Unconventional myosins serve in intracellular movements. MYO10 binds to actin filaments and actin bundles and functions as a plus end-directed motor. Moves with higher velocity and takes larger steps on actin bundles than on single actin filaments. The tail domain binds to membranous compartments containing phosphatidylinositol 3,4,5-trisphosphate or integrins, and mediates cargo transport along actin filaments. Regulates cell shape, cell spreading and cell adhesion. Stimulates the formation and elongation of filopodia. In hippocampal neurons it induces the formation of dendritic filopodia by trafficking the actin-remodeling protein VASP to the tips of filopodia, where it promotes actin elongation. Plays a role in formation of the podosome belt in osteoclasts. Its function is as follows. Functions as a dominant-negative regulator of isoform 1, suppressing its filopodia-inducing and axon outgrowth-promoting activities. In hippocampal neurons, it increases VASP retention in spine heads to induce spine formation and spine head expansion. The sequence is that of Unconventional myosin-X (Myo10) from Mus musculus (Mouse).